The chain runs to 966 residues: Catenin alpha-2 (966 aa).

Positions 924–940 are enriched in basic and acidic residues; the sequence is PEKKPLVKREKPEEYQT. Positions 924-952 are disordered; the sequence is PEKKPLVKREKPEEYQTRVRRGSQKKHIS. The span at 941–951 shows a compositional bias: basic residues; it reads RVRRGSQKKHI.

It belongs to the vinculin/alpha-catenin family.

It localises to the cell membrane. It is found in the cytoplasm. The protein resides in the cytoskeleton. The protein localises to the cell junction. Its subcellular location is the adherens junction. It localises to the cell projection. It is found in the axon. The protein resides in the nucleus. May function as a linker between cadherin adhesion receptors and the cytoskeleton to regulate cell-cell adhesion and differentiation in the nervous system. The chain is Catenin alpha-2 (ctnna2) from Xenopus laevis (African clawed frog).